Reading from the N-terminus, the 473-residue chain is Cysteine--tRNA ligase (473 aa).

Position 28 (cysteine 28) interacts with Zn(2+). A 'HIGH' region motif is present at residues methionine 30–histidine 40. 3 residues coordinate Zn(2+): cysteine 209, histidine 234, and glutamate 238. The short motif at lysine 282–serine 286 is the 'KMSKS' region element. Residue lysine 285 coordinates ATP.

It belongs to the class-I aminoacyl-tRNA synthetase family. Monomer. It depends on Zn(2+) as a cofactor.

The protein resides in the cytoplasm. It catalyses the reaction tRNA(Cys) + L-cysteine + ATP = L-cysteinyl-tRNA(Cys) + AMP + diphosphate. This is Cysteine--tRNA ligase from Neisseria gonorrhoeae (strain ATCC 700825 / FA 1090).